The chain runs to 259 residues: NAD kinase (259 aa).

The active-site Proton acceptor is D43. NAD(+) contacts are provided by residues 43–44, 111–112, and R136; these read DG and NE.

It belongs to the NAD kinase family. A divalent metal cation serves as cofactor.

The protein resides in the cytoplasm. The catalysed reaction is NAD(+) + ATP = ADP + NADP(+) + H(+). In terms of biological role, involved in the regulation of the intracellular balance of NAD and NADP, and is a key enzyme in the biosynthesis of NADP. Catalyzes specifically the phosphorylation on 2'-hydroxyl of the adenosine moiety of NAD to yield NADP. This Mycoplasma pneumoniae (strain ATCC 29342 / M129 / Subtype 1) (Mycoplasmoides pneumoniae) protein is NAD kinase.